Consider the following 335-residue polypeptide: Delta(7)-sterol 5(6)-desaturase erg3B (335 aa).

The next 3 helical transmembrane spans lie at 74 to 94, 113 to 133, and 152 to 172; these read IWAFGLLLYLTTASLSFALVF, IGQALRAMPVMAALTAPLFLA, and LYTYLQYPLFIAFTDFAIYWI. Residues 160–284 form the Fatty acid hydroxylase domain; sequence LFIAFTDFAI…FITFWDRIGG (125 aa). The Histidine box-1 signature appears at 173–177; that stretch reads HRGLH. Residues 186 to 190 carry the Histidine box-2 motif; that stretch reads HKPHH. A helical transmembrane segment spans residues 219-239; that stretch reads PFLFPLQKAAYLGLFVFVTIW. N-linked (GlcNAc...) asparagine glycosylation occurs at Asn-256. The Histidine box-3 motif lies at 261–265; it reads HTIHH.

It belongs to the sterol desaturase family. It depends on Fe cation as a cofactor.

It localises to the endoplasmic reticulum membrane. The protein operates within steroid metabolism; ergosterol biosynthesis. In terms of biological role, delta(7)-sterol 5(6)-desaturase; part of the third module of ergosterol biosynthesis pathway that includes the late steps of the pathway. Erg3B catalyzes the introduction of a C-5 double bond in the B ring to produce 5-dehydroepisterol. The third module or late pathway involves the ergosterol synthesis itself through consecutive reactions that mainly occur in the endoplasmic reticulum (ER) membrane. Firstly, the squalene synthase erg9 catalyzes the condensation of 2 farnesyl pyrophosphate moieties to form squalene, which is the precursor of all steroids. Squalene synthase is crucial for balancing the incorporation of farnesyl diphosphate (FPP) into sterol and nonsterol isoprene synthesis. Secondly, squalene is converted into lanosterol by the consecutive action of the squalene epoxidase erg1 and the lanosterol synthase erg7. Then, the delta(24)-sterol C-methyltransferase erg6 methylates lanosterol at C-24 to produce eburicol. Eburicol is the substrate of the sterol 14-alpha demethylase encoded by cyp51A and cyp51B, to yield 4,4,24-trimethyl ergosta-8,14,24(28)-trienol. The C-14 reductase erg24 then reduces the C14=C15 double bond which leads to 4,4-dimethylfecosterol. A sequence of further demethylations at C-4, involving the C-4 demethylation complex containing the C-4 methylsterol oxidases erg25A or erg25B, the sterol-4-alpha-carboxylate 3-dehydrogenase erg26 and the 3-keto-steroid reductase erg27, leads to the production of fecosterol via 4-methylfecosterol. The C-8 sterol isomerase erg2 then catalyzes the reaction which results in unsaturation at C-7 in the B ring of sterols and thus converts fecosterol to episterol. The sterol-C5-desaturase erg3B then catalyzes the introduction of a C-5 double bond in the B ring to produce 5-dehydroepisterol. The 2 other sterol-C5-desaturases, erg3A and erg3C, seem to be less important in ergosterol biosynthesis. The C-22 sterol desaturase erg5 further converts 5-dehydroepisterol into ergosta-5,7,22,24(28)-tetraen-3beta-ol by forming the C-22(23) double bond in the sterol side chain. Finally, ergosta-5,7,22,24(28)-tetraen-3beta-ol is substrate of the C-24(28) sterol reductases erg4A and erg4B to produce ergosterol. Possible alternative sterol biosynthetic pathways might exist from fecosterol to ergosterol, depending on the activities of the erg3 isoforms. The sequence is that of Delta(7)-sterol 5(6)-desaturase erg3B from Aspergillus fumigatus (strain ATCC MYA-4609 / CBS 101355 / FGSC A1100 / Af293) (Neosartorya fumigata).